Consider the following 568-residue polypeptide: Zinc finger protein 583 (568 aa).

The KRAB domain occupies 6 to 77 (LTFEDVSVNF…QKKGARDTCP (72 aa)). 12 consecutive C2H2-type zinc fingers follow at residues 211-233 (LKCS…QRIH), 239-261 (YACV…KRIH), 267-289 (YECK…QRVH), 295-317 (YQCK…QRIH), 323-345 (FECI…QRIH), 351-373 (YVCH…QRIH), 379-401 (YECK…QRVH), 407-429 (YECK…QRVH), 435-457 (YECA…QRSH), 463-485 (YICK…QRIH), 491-513 (YECN…QRIH), and 519-541 (YECK…EKVH).

It belongs to the krueppel C2H2-type zinc-finger protein family.

It localises to the nucleus. In terms of biological role, may be involved in transcriptional regulation. The chain is Zinc finger protein 583 (Znf583) from Mus musculus (Mouse).